The following is a 54-amino-acid chain: Preprotein translocase subunit SecG (54 aa).

At 1-31 (MSSGSNSGGLMSSAGLVRYFDSEDRDAIAID) the chain is on the cytoplasmic side. A helical membrane pass occupies residues 32–53 (PKTVLAFCVLFGVFVQILSLTV). A54 is a topological domain (extracellular).

It belongs to the SEC61-beta family. Component of the protein translocase complex. Heterotrimer consisting of alpha (SecY), beta (SecG) and gamma (SecE) subunits. Can form oligomers of the heterotrimer.

The protein resides in the cell membrane. In terms of biological role, involved in protein export. The function of the beta subunit is unknown, but it may be involved in stabilization of the trimeric complex. In Halorubrum lacusprofundi (strain ATCC 49239 / DSM 5036 / JCM 8891 / ACAM 34), this protein is Preprotein translocase subunit SecG.